The primary structure comprises 105 residues: Integration host factor subunit beta (105 aa).

The protein belongs to the bacterial histone-like protein family. As to quaternary structure, heterodimer of an alpha and a beta chain.

Its function is as follows. This protein is one of the two subunits of integration host factor, a specific DNA-binding protein that functions in genetic recombination as well as in transcriptional and translational control. This chain is Integration host factor subunit beta, found in Bradyrhizobium sp. (strain ORS 278).